A 419-amino-acid polypeptide reads, in one-letter code: L-rhamnose isomerase (419 aa).

Histidine 262, aspartate 294, and aspartate 296 together coordinate Mn(2+).

Belongs to the rhamnose isomerase family. As to quaternary structure, homotetramer. Mn(2+) serves as cofactor.

It localises to the cytoplasm. The enzyme catalyses L-rhamnopyranose = L-rhamnulose. It participates in carbohydrate degradation; L-rhamnose degradation; glycerone phosphate from L-rhamnose: step 1/3. In terms of biological role, catalyzes the interconversion of L-rhamnose and L-rhamnulose. The sequence is that of L-rhamnose isomerase from Escherichia coli O17:K52:H18 (strain UMN026 / ExPEC).